The sequence spans 225 residues: Ribonuclease 3 (225 aa).

The 123-residue stretch at 7-129 folds into the RNase III domain; it reads MPRLCRTLGY…IIGAVYIDSG (123 aa). Glutamate 42 is a binding site for Mg(2+). Residue aspartate 46 is part of the active site. Positions 115 and 118 each coordinate Mg(2+). The active site involves glutamate 118. The DRBM domain occupies 155–225; the sequence is DPKTLLQELL…AADALELMKR (71 aa).

Belongs to the ribonuclease III family. In terms of assembly, homodimer. The cofactor is Mg(2+).

It localises to the cytoplasm. The catalysed reaction is Endonucleolytic cleavage to 5'-phosphomonoester.. Functionally, digests double-stranded RNA. Involved in the processing of primary rRNA transcript to yield the immediate precursors to the large and small rRNAs (23S and 16S). Processes some mRNAs, and tRNAs when they are encoded in the rRNA operon. Processes pre-crRNA and tracrRNA of type II CRISPR loci if present in the organism. The chain is Ribonuclease 3 from Shewanella sediminis (strain HAW-EB3).